The chain runs to 265 residues: Tetrapyrrole-binding protein, chloroplastic (265 aa).

The tract at residues 1–24 (MATTNSLHHHHHSSPSYTHHRNNL) is disordered. Residues 1 to 69 (MATTNSLHHH…TAVSAVSTTN (69 aa)) constitute a chloroplast transit peptide. Basic residues predominate over residues 7–23 (LHHHHHSSPSYTHHRNN).

Interacts with CHLH, the protoporphyrin IX-binding subunit of Mg-chelatase. Monomer or extremely compact dimer.

The protein resides in the plastid. The protein localises to the chloroplast membrane. Its function is as follows. Regulates chlorophyll synthesis and plastid-to-nucleus signal transduction by binding both the product and the substrate of Mg-chelatase, an enzyme that produces magnesium-protoporphyrin IX (Mg-Proto). Also activates Mg-chelatase. Neither binds abscisic acid (ABA) nor is involved in ABA signaling. The chain is Tetrapyrrole-binding protein, chloroplastic (GUN4) from Arabidopsis thaliana (Mouse-ear cress).